The chain runs to 271 residues: 4-hydroxy-tetrahydrodipicolinate reductase (271 aa).

NAD(+)-binding positions include 10–15 (GAGGRM), glutamate 36, 100–102 (GTT), and 124–127 (SGNM). The Proton donor/acceptor role is filled by histidine 157. Histidine 158 lines the (S)-2,3,4,5-tetrahydrodipicolinate pocket. Lysine 161 functions as the Proton donor in the catalytic mechanism. 167–168 (GT) serves as a coordination point for (S)-2,3,4,5-tetrahydrodipicolinate.

Belongs to the DapB family.

The protein resides in the cytoplasm. The enzyme catalyses (S)-2,3,4,5-tetrahydrodipicolinate + NAD(+) + H2O = (2S,4S)-4-hydroxy-2,3,4,5-tetrahydrodipicolinate + NADH + H(+). It carries out the reaction (S)-2,3,4,5-tetrahydrodipicolinate + NADP(+) + H2O = (2S,4S)-4-hydroxy-2,3,4,5-tetrahydrodipicolinate + NADPH + H(+). Its pathway is amino-acid biosynthesis; L-lysine biosynthesis via DAP pathway; (S)-tetrahydrodipicolinate from L-aspartate: step 4/4. In terms of biological role, catalyzes the conversion of 4-hydroxy-tetrahydrodipicolinate (HTPA) to tetrahydrodipicolinate. This is 4-hydroxy-tetrahydrodipicolinate reductase from Rhodopseudomonas palustris (strain HaA2).